We begin with the raw amino-acid sequence, 210 residues long: Shikimate kinase (210 aa).

34–39 (GVGKSV) provides a ligand contact to ATP. Ser-38 is a Mg(2+) binding site. Asp-56, Arg-80, and Gly-102 together coordinate substrate. Position 140 (Arg-140) interacts with ATP. Arg-159 contacts substrate.

It belongs to the shikimate kinase family. Monomer. Requires Mg(2+) as cofactor.

The protein resides in the cytoplasm. It carries out the reaction shikimate + ATP = 3-phosphoshikimate + ADP + H(+). The protein operates within metabolic intermediate biosynthesis; chorismate biosynthesis; chorismate from D-erythrose 4-phosphate and phosphoenolpyruvate: step 5/7. Its function is as follows. Catalyzes the specific phosphorylation of the 3-hydroxyl group of shikimic acid using ATP as a cosubstrate. The sequence is that of Shikimate kinase from Bartonella henselae (strain ATCC 49882 / DSM 28221 / CCUG 30454 / Houston 1) (Rochalimaea henselae).